Consider the following 363-residue polypeptide: 3-dehydroquinate synthase (363 aa).

Residues 70–75, 104–108, 128–129, Lys141, Lys150, and 168–171 each bind NAD(+); these read SGETSK, GVIGD, TT, and TLDT. Residues Glu183, His245, and His262 each contribute to the Zn(2+) site.

This sequence belongs to the sugar phosphate cyclases superfamily. Dehydroquinate synthase family. It depends on Co(2+) as a cofactor. The cofactor is Zn(2+). NAD(+) serves as cofactor.

It is found in the cytoplasm. It carries out the reaction 7-phospho-2-dehydro-3-deoxy-D-arabino-heptonate = 3-dehydroquinate + phosphate. Its pathway is metabolic intermediate biosynthesis; chorismate biosynthesis; chorismate from D-erythrose 4-phosphate and phosphoenolpyruvate: step 2/7. Its function is as follows. Catalyzes the conversion of 3-deoxy-D-arabino-heptulosonate 7-phosphate (DAHP) to dehydroquinate (DHQ). This chain is 3-dehydroquinate synthase, found in Alkaliphilus oremlandii (strain OhILAs) (Clostridium oremlandii (strain OhILAs)).